We begin with the raw amino-acid sequence, 389 residues long: 8-amino-7-oxononanoate synthase (389 aa).

Arg-19 provides a ligand contact to substrate. Residue 106–107 (GY) coordinates pyridoxal 5'-phosphate. His-131 provides a ligand contact to substrate. Pyridoxal 5'-phosphate-binding positions include Ser-178, 203 to 206 (DDAH), and 234 to 237 (TLSK). N6-(pyridoxal phosphate)lysine is present on Lys-237. Thr-351 is a binding site for substrate.

The protein belongs to the class-II pyridoxal-phosphate-dependent aminotransferase family. BioF subfamily. Homodimer. Pyridoxal 5'-phosphate serves as cofactor.

The enzyme catalyses 6-carboxyhexanoyl-[ACP] + L-alanine + H(+) = (8S)-8-amino-7-oxononanoate + holo-[ACP] + CO2. It functions in the pathway cofactor biosynthesis; biotin biosynthesis. Its function is as follows. Catalyzes the decarboxylative condensation of pimeloyl-[acyl-carrier protein] and L-alanine to produce 8-amino-7-oxononanoate (AON), [acyl-carrier protein], and carbon dioxide. Can also use pimeloyl-CoA instead of pimeloyl-ACP as substrate. This Lysinibacillus sphaericus (Bacillus sphaericus) protein is 8-amino-7-oxononanoate synthase (bioF).